A 397-amino-acid polypeptide reads, in one-letter code: ATP-dependent RNA helicase eIF4A (397 aa).

Positions 23–51 (YKFDDLNLKPNIVRGIFGYGYETPSAIQQ) match the Q motif motif. In terms of domain architecture, Helicase ATP-binding spans 54-224 (ILPITEGRDV…TKFMNNPVRI (171 aa)). 67–74 (AQSGTGKT) contacts ATP. Residues 172-175 (DEAD) carry the DEAD box motif. A Helicase C-terminal domain is found at 235–396 (GIKQFYINVE…EMPADIGALF (162 aa)).

Belongs to the DEAD box helicase family. eIF4A subfamily. Component of the eIF4F complex, which composition varies with external and internal environmental conditions. It is composed of at least eIF4A, eIF4E and eIF4G.

Its subcellular location is the cytoplasm. The enzyme catalyses ATP + H2O = ADP + phosphate + H(+). ATP-dependent RNA helicase which is a subunit of the eIF4F complex involved in cap recognition and is required for mRNA binding to ribosome. In the current model of translation initiation, eIF4A unwinds RNA secondary structures in the 5'-UTR of mRNAs which is necessary to allow efficient binding of the small ribosomal subunit, and subsequent scanning for the initiator codon. The polypeptide is ATP-dependent RNA helicase eIF4A (TIF1) (Scheffersomyces stipitis (strain ATCC 58785 / CBS 6054 / NBRC 10063 / NRRL Y-11545) (Yeast)).